A 191-amino-acid chain; its full sequence is NADH-quinone oxidoreductase subunit B (191 aa).

[4Fe-4S] cluster-binding residues include cysteine 70, cysteine 71, cysteine 135, and cysteine 165.

The protein belongs to the complex I 20 kDa subunit family. NDH-1 is composed of 14 different subunits. Subunits NuoB, C, D, E, F, and G constitute the peripheral sector of the complex. The cofactor is [4Fe-4S] cluster.

The protein localises to the cell inner membrane. The enzyme catalyses a quinone + NADH + 5 H(+)(in) = a quinol + NAD(+) + 4 H(+)(out). NDH-1 shuttles electrons from NADH, via FMN and iron-sulfur (Fe-S) centers, to quinones in the respiratory chain. The immediate electron acceptor for the enzyme in this species is believed to be ubiquinone. Couples the redox reaction to proton translocation (for every two electrons transferred, four hydrogen ions are translocated across the cytoplasmic membrane), and thus conserves the redox energy in a proton gradient. This chain is NADH-quinone oxidoreductase subunit B, found in Parvibaculum lavamentivorans (strain DS-1 / DSM 13023 / NCIMB 13966).